Here is a 649-residue protein sequence, read N- to C-terminus: Leucine-rich repeat transmembrane protein FLRT3 (649 aa).

The signal sequence occupies residues 1-28 (MISAAWSIFLIGTKIGLFLQVAPLSVMA). The region spanning 29 to 58 (KSCPSVCRCDAGFIYCNDRFLTSIPTGIPE) is the LRRNT domain. At 29–528 (KSCPSVCRCD…KEPYKNPNLP (500 aa)) the chain is on the extracellular side. Disulfide bonds link cysteine 31–cysteine 37 and cysteine 35–cysteine 44. The segment at 38 to 67 (DAGFIYCNDRFLTSIPTGIPEDATTLYLQN) is interaction with ADGRL3. 10 LRR repeats span residues 59–80 (DATT…SDLK), 84–104 (KVER…NLPK), 105–126 (YVKE…SLSK), 129–150 (YLEE…EGAF), 155–175 (YLRL…GLPR), 176–197 (TIEE…SLQG), 200–220 (SLKR…GDKV), 226–247 (NLTE…LPGT), 248–269 (NLRK…AFSY), and 272–293 (QLYR…IFDD). An N-linked (GlcNAc...) asparagine glycan is attached at asparagine 226. 2 N-linked (GlcNAc...) asparagine glycosylation sites follow: asparagine 282 and asparagine 296. The LRRCT domain occupies 305–357 (NPWYCGCKMKWVRDWLQSLPVKVNVRGLMCQAPEKVRGMAIKDLNAELFDCKD). Cysteine 309 and cysteine 334 are disulfide-bonded. The disordered stretch occupies residues 387–407 (KQPDIKNPKLTKDHQTTGSPS). A compositionally biased stretch (basic and acidic residues) spans 389–401 (PDIKNPKLTKDHQ). In terms of domain architecture, Fibronectin type-III spans 409 to 504 (KTITITVKSV…VCIETETAPL (96 aa)). Residues 529-549 (LAAIIGGAVALVTIALLALVC) form a helical membrane-spanning segment. The Cytoplasmic portion of the chain corresponds to 550–649 (WYVHRNGSLF…GIPDSDHSHS (100 aa)). Residues 622 to 649 (LYKNNHSESSSNRSYRDSGIPDSDHSHS) form a disordered region.

In terms of assembly, monomer and homodimer. Self-associates (via leucine-rich repeats), giving rise to homooligomers. Interacts with FGFR1. Interacts (via extracellular domain) with ADGRL1/LPHN1 and LPHN2 (via olfactomedin-like domain). Interacts (via extracellular domain) with ADGRL3 (via olfactomedin-like domain); the interaction is direct. Interacts (via extracellular domain) with UNC5B and UNC5D (via extracellular domain); the interaction is direct. Identified in complexes composed of FLRT3, ADGRL3 and UNC5B, respectively FLRT3, ADGRL3 and UNC5D. May also interact (via extracellular domain) with UNC5A and UNC5C. Interacts (via cytoplasmic domain) with ROBO1. In terms of processing, N-glycosylated. Proteolytic cleavage in the juxtamembrane region gives rise to a soluble ectodomain. Cleavage is probably effected by a metalloprotease. Expressed in kidney, brain, pancreas, skeletal muscle, lung, liver, placenta, and heart.

The protein resides in the cell membrane. It is found in the presynaptic cell membrane. Its subcellular location is the endoplasmic reticulum membrane. The protein localises to the cell junction. It localises to the focal adhesion. The protein resides in the secreted. It is found in the cell projection. Its subcellular location is the axon. The protein localises to the growth cone membrane. Functionally, functions in cell-cell adhesion, cell migration and axon guidance, exerting an attractive or repulsive role depending on its interaction partners. Plays a role in the spatial organization of brain neurons. Plays a role in vascular development in the retina. Plays a role in cell-cell adhesion via its interaction with ADGRL3 and probably also other latrophilins that are expressed at the surface of adjacent cells. Interaction with the intracellular domain of ROBO1 mediates axon attraction towards cells expressing NTN1. Mediates axon growth cone collapse and plays a repulsive role in neuron guidance via its interaction with UNC5B, and possibly also other UNC-5 family members. Promotes neurite outgrowth (in vitro). Mediates cell-cell contacts that promote an increase both in neurite number and in neurite length. Plays a role in the regulation of the density of glutamaergic synapses. Plays a role in fibroblast growth factor-mediated signaling cascades. Required for normal morphogenesis during embryonic development, but not for normal embryonic patterning. Required for normal ventral closure, headfold fusion and definitive endoderm migration during embryonic development. Required for the formation of a normal basement membrane and the maintenance of a normal anterior visceral endoderm during embryonic development. The polypeptide is Leucine-rich repeat transmembrane protein FLRT3 (FLRT3) (Homo sapiens (Human)).